The sequence spans 226 residues: MGGKLSKKKKGYNVNDEKAKDKDKKAEGAGTEEEGTPKESEPQAAADATEVKESTEEKPKDAADGEAKAEEKEADKAAAAKEEAPKAEPEKSEGAAEEQPEPAPAPEQEAAAPGPAAGGEAPKAGEASAESTGAADGAAPEEGEAKKTEAPAAAGPEAKSDAAPAASDSKPSSAEPAPSSKETPAASEAPSSAAKAPAPAAPAAAEPQAEAPAAAASSEQSVAVKE.

Positions Met1–Gly11 are enriched in basic residues. Residues Met1–Glu226 are disordered. Gly2 carries N-myristoyl glycine lipidation. Over residues Asn15–Glu27 the composition is skewed to basic and acidic residues. A Glycyl lysine isopeptide (Lys-Gly) (interchain with G-Cter in SUMO2) cross-link involves residue Lys25. Phosphothreonine occurs at positions 31 and 36. Ser40 bears the Phosphoserine mark. Basic and acidic residues predominate over residues Thr49–Gly94. Lys86 participates in a covalent cross-link: Glycyl lysine isopeptide (Lys-Gly) (interchain with G-Cter in SUMO2). Ser92, Ser128, and Ser131 each carry phosphoserine. Composition is skewed to low complexity over residues Pro106–Pro140 and Ala150–Glu226. A Glycyl lysine isopeptide (Lys-Gly) (interchain with G-Cter in SUMO2) cross-link involves residue Lys159. Residues Ser160, Ser167, Ser169, Ser173, Ser192, and Ser218 each carry the phosphoserine modification.

Belongs to the BASP1 family.

It localises to the cell membrane. The protein resides in the cell projection. It is found in the growth cone. In Mus musculus (Mouse), this protein is Brain acid soluble protein 1 (Basp1).